The chain runs to 315 residues: Olfactory receptor 5A1 (315 aa).

Residues 1–28 (MSITKAWNSSSVTMFILLGFTDHPELQA) are Extracellular-facing. Asparagine 8 carries N-linked (GlcNAc...) asparagine glycosylation. The helical transmembrane segment at 29 to 52 (LLFVTFLGIYLTTLAWNLALIFLI) threads the bilayer. Residues 53-60 (RGDTHLHT) are Cytoplasmic-facing. Residues 61 to 82 (PMYFFLSNLSFIDICYSSAVAP) traverse the membrane as a helical segment. Over 83–103 (NMLTDFFWEQKTISFVGCAAQ) the chain is Extracellular. An intrachain disulfide couples cysteine 100 to cysteine 192. Residues 104 to 123 (FFFFVGMGLSECLLLTAMAY) traverse the membrane as a helical segment. Residues 124-142 (DRYAAISSPLLYPTIMTQG) lie on the Cytoplasmic side of the membrane. Residues 143–161 (LCTRMVVGAYVGGFLSSLI) form a helical membrane-spanning segment. The Extracellular segment spans residues 162–198 (QASSIFRLHFCGPNIINHFFCDLPPVLALSCSDTFLS). A helical membrane pass occupies residues 199–222 (QVVNFLVVVTVGGTSFLQLLISYG). At 223-239 (YIVSAVLKIPSAEGRWK) the chain is on the cytoplasmic side. A helical membrane pass occupies residues 240-262 (ACNTCASHLMVVTLLFGTALFVY). At 263 to 275 (LRPSSSYLLGRDK) the chain is on the extracellular side. The helical transmembrane segment at 276-295 (VVSVFYSLVIPMLNPLIYSL) threads the bilayer. Residues 296 to 315 (RNKEIKDALWKVLERKKVFS) lie on the Cytoplasmic side of the membrane.

It belongs to the G-protein coupled receptor 1 family.

It localises to the cell membrane. Its function is as follows. Odorant receptor. This chain is Olfactory receptor 5A1 (OR5A1), found in Homo sapiens (Human).